The chain runs to 370 residues: Cyclic AMP-responsive element-binding protein 3-like protein 4 (370 aa).

The tract at residues 1–55 (MELGCPELLEPPEDIFSTGSFLELGFNGPASKVPVTRGLQKSEPDDFLNLFIDPN) is required for transcriptional activation. Over 1 to 271 (MELGCPELLE…QTSSRAAQTS (271 aa)) the chain is Cytoplasmic. Positions 61 to 85 (ETSPGRDSGVSEDPGSPAQQASSSP) are disordered. A compositionally biased stretch (low complexity) spans 76 to 85 (SPAQQASSSP). In terms of domain architecture, bZIP spans 193 to 256 (ILKKIRRKIR…IFLMEQVRQL (64 aa)). The basic motif stretch occupies residues 195 to 234 (KKIRRKIRNKQSAQDSRRRKKEYLDGLESRVAACSEQNQK). A leucine-zipper region spans residues 235–256 (LQRKVQELERQNIFLMEQVRQL). A helical; Signal-anchor for type II membrane protein membrane pass occupies residues 272–292 (TCVLILLFSLALIILPSFSPF). Over 293 to 370 (QGQSEARPED…IRGMVHTDEM (78 aa)) the chain is Lumenal. Residues N318 and N342 are each glycosylated (N-linked (GlcNAc...) asparagine).

The protein belongs to the bZIP family. ATF subfamily. Binds DNA as a dimer. Forms a heterodimer with CREM isoform Tau. Controlled by regulated intramembrane proteolysis (RIP). Following ER stress a fragment containing the cytoplasmic transcription factor domain is released by proteolysis. The cleavage seems to be performed sequentially by site-1 and site-2 proteases (PS1 and PS2). PS1 cleavage may be suppressed by a determinant in the C-terminal region. Predominantly expressed at high levels in testis with isoform 2 being the predominant isoform. Specifically expressed in postmeiotic spermatids and accumulates in the mid/late stage (at protein level). Ubiquitously expressed at low levels.

The protein resides in the endoplasmic reticulum membrane. Its subcellular location is the cytoplasmic vesicle. The protein localises to the secretory vesicle. It is found in the acrosome inner membrane. It localises to the nucleus. Its function is as follows. Transcriptional activator that may play a role in the unfolded protein response of the testis. Proposed to be involved in spermiogenesis. May be involved in regulating the maturation of sperm head nuclei. Alternatively proposed to be a paternally delivered transcription factor that may function in early zygotic gene activation. Increases the binding of CREM isoform Tau with CRE. The CREM isoform Tau-CREB3L4 heterodimer functions through CRE but not through UPRE and may recruit HIRA to CRE to regulate histone exchange. The protein is Cyclic AMP-responsive element-binding protein 3-like protein 4 (Creb3l4) of Mus musculus (Mouse).